A 497-amino-acid polypeptide reads, in one-letter code: Cytochrome P450 2D6 (497 aa).

Residue D301 coordinates substrate. Position 443 (C443) interacts with heme.

It belongs to the cytochrome P450 family. Heme serves as cofactor.

The protein resides in the endoplasmic reticulum membrane. It is found in the microsome membrane. The enzyme catalyses (5Z,8Z,11Z,14Z)-eicosatetraenoate + reduced [NADPH--hemoprotein reductase] + O2 = (8R,9S)-epoxy-(5Z,11Z,14Z)-eicosatrienoate + oxidized [NADPH--hemoprotein reductase] + H2O + H(+). It carries out the reaction (5Z,8Z,11Z,14Z)-eicosatetraenoate + reduced [NADPH--hemoprotein reductase] + O2 = (11R,12S)-epoxy-(5Z,8Z,14Z)-eicosatrienoate + oxidized [NADPH--hemoprotein reductase] + H2O + H(+). The catalysed reaction is (5Z,8Z,11Z,14Z)-eicosatetraenoate + reduced [NADPH--hemoprotein reductase] + O2 = (14S,15R)-epoxy-(5Z,8Z,11Z)-eicosatrienoate + oxidized [NADPH--hemoprotein reductase] + H2O + H(+). It catalyses the reaction N-(5Z,8Z,11Z,14Z-eicosatetraenoyl)-ethanolamine + reduced [NADPH--hemoprotein reductase] + O2 = N-(8,9-epoxy-5Z,11Z,14Z-eicosatrienoyl)-ethanolamine + oxidized [NADPH--hemoprotein reductase] + H2O + H(+). The enzyme catalyses N-(5Z,8Z,11Z,14Z-eicosatetraenoyl)-ethanolamine + reduced [NADPH--hemoprotein reductase] + O2 = N-(11,12-epoxy-5Z,8Z,14Z-eicosatrienoyl)-ethanolamine + oxidized [NADPH--hemoprotein reductase] + H2O + H(+). It carries out the reaction N-(5Z,8Z,11Z,14Z-eicosatetraenoyl)-ethanolamine + reduced [NADPH--hemoprotein reductase] + O2 = N-(14,15-epoxy-5Z,8Z,11Z-eicosatrienoyl)-ethanolamine + oxidized [NADPH--hemoprotein reductase] + H2O + H(+). The catalysed reaction is N-(5Z,8Z,11Z,14Z-eicosatetraenoyl)-ethanolamine + reduced [NADPH--hemoprotein reductase] + O2 = N-(20-hydroxy-5Z,8Z,11Z,14Z-eicosatetraenoyl)-ethanolamine + oxidized [NADPH--hemoprotein reductase] + H2O + H(+). It catalyses the reaction (5Z,8Z,11Z,14Z,17Z)-eicosapentaenoate + reduced [NADPH--hemoprotein reductase] + O2 = (17S,18R)-epoxy-(5Z,8Z,11Z,14Z)-eicosatetraenoate + oxidized [NADPH--hemoprotein reductase] + H2O + H(+). The enzyme catalyses (4Z,7Z,10Z,13Z,16Z,19Z)-docosahexaenoate + reduced [NADPH--hemoprotein reductase] + O2 = (19R,20S)-epoxy-(4Z,7Z,10Z,13Z,16Z)-docosapentaenoate + oxidized [NADPH--hemoprotein reductase] + H2O + H(+). It carries out the reaction (4Z,7Z,10Z,13Z,16Z,19Z)-docosahexaenoate + reduced [NADPH--hemoprotein reductase] + O2 = (19S,20R)-epoxy-(4Z,7Z,10Z,13Z,16Z)-docosapentaenoate + oxidized [NADPH--hemoprotein reductase] + H2O + H(+). The catalysed reaction is cholesterol + reduced [NADPH--hemoprotein reductase] + O2 = 25-hydroxycholesterol + oxidized [NADPH--hemoprotein reductase] + H2O + H(+). It catalyses the reaction all-trans-retinol + reduced [NADPH--hemoprotein reductase] + O2 = all-trans-retinal + oxidized [NADPH--hemoprotein reductase] + 2 H2O + H(+). Its pathway is cofactor metabolism; retinol metabolism. It functions in the pathway lipid metabolism; fatty acid metabolism. The protein operates within steroid metabolism; cholesterol metabolism. A cytochrome P450 monooxygenase involved in the metabolism of fatty acids, steroids and retinoids. Mechanistically, uses molecular oxygen inserting one oxygen atom into a substrate, and reducing the second into a water molecule, with two electrons provided by NADPH via cytochrome P450 reductase (NADPH--hemoprotein reductase). Catalyzes the epoxidation of double bonds of polyunsaturated fatty acids (PUFA). Metabolizes endocannabinoid arachidonoylethanolamide (anandamide) to 20-hydroxyeicosatetraenoic acid ethanolamide (20-HETE-EA) and 8,9-, 11,12-, and 14,15-epoxyeicosatrienoic acid ethanolamides (EpETrE-EAs), potentially modulating endocannabinoid system signaling. Catalyzes the hydroxylation of carbon-hydrogen bonds. Metabolizes cholesterol toward 25-hydroxycholesterol, a physiological regulator of cellular cholesterol homeostasis. Catalyzes the oxidative transformations of all-trans retinol to all-trans retinal, a precursor for the active form all-trans-retinoic acid. Also involved in the oxidative metabolism of drugs such as antiarrhythmics, adrenoceptor antagonists, and tricyclic antidepressants. In Homo sapiens (Human), this protein is Cytochrome P450 2D6.